The chain runs to 75 residues: Small ribosomal subunit protein bS18 (75 aa).

The protein belongs to the bacterial ribosomal protein bS18 family. As to quaternary structure, part of the 30S ribosomal subunit. Forms a tight heterodimer with protein bS6.

Its function is as follows. Binds as a heterodimer with protein bS6 to the central domain of the 16S rRNA, where it helps stabilize the platform of the 30S subunit. In Wigglesworthia glossinidia brevipalpis, this protein is Small ribosomal subunit protein bS18.